Reading from the N-terminus, the 207-residue chain is PITH domain-containing protein P35G2.02 (207 aa).

One can recognise a PITH domain in the interval 13–189 (EHPFESGPND…PVVTIYEATP (177 aa)).

This sequence belongs to the PITHD1 family.

Its subcellular location is the cytoplasm. The protein resides in the nucleus. This Schizosaccharomyces pombe (strain 972 / ATCC 24843) (Fission yeast) protein is PITH domain-containing protein P35G2.02.